Consider the following 57-residue polypeptide: COP9 signalosome complex subunit 9 (57 aa).

It belongs to the CSN9 family. In terms of assembly, component of the CSN complex, probably composed of cops1, cops2, cops3, cops4, cops5, cops6, cops7, cops8 and cops9.

It localises to the nucleus. The protein resides in the cytoplasm. The protein localises to the nucleoplasm. Its function is as follows. Component of the COP9 signalosome complex (CSN), a complex involved in various cellular and developmental processes. The CSN complex is an essential regulator of the ubiquitin (Ubl) conjugation pathway by mediating the deneddylation of the cullin subunits of SCF-type E3 ligase complexes, leading to decrease the Ubl ligase activity. May play a role in cell proliferation. The polypeptide is COP9 signalosome complex subunit 9 (Xenopus tropicalis (Western clawed frog)).